The primary structure comprises 482 residues: PAN domain-containing protein At5g03700 (482 aa).

The first 31 residues, 1-31, serve as a signal peptide directing secretion; sequence MEGLCLNSFTRVLLLLFVFLVFSHKWQRVNA. Positions 330–411 constitute a PAN domain; sequence CDKTTEFKVV…SKLGYFKVRE (82 aa). 2 disulfide bridges follow: C363–C385 and C367–C373. Residues 425–445 traverse the membrane as a helical segment; the sequence is GMSLLAVIALVLMVAMVYVGF.

It localises to the membrane. The polypeptide is PAN domain-containing protein At5g03700 (Arabidopsis thaliana (Mouse-ear cress)).